The primary structure comprises 195 residues: Imidazoleglycerol-phosphate dehydratase (195 aa).

This sequence belongs to the imidazoleglycerol-phosphate dehydratase family.

The protein localises to the cytoplasm. The enzyme catalyses D-erythro-1-(imidazol-4-yl)glycerol 3-phosphate = 3-(imidazol-4-yl)-2-oxopropyl phosphate + H2O. It functions in the pathway amino-acid biosynthesis; L-histidine biosynthesis; L-histidine from 5-phospho-alpha-D-ribose 1-diphosphate: step 6/9. This Desulfosudis oleivorans (strain DSM 6200 / JCM 39069 / Hxd3) (Desulfococcus oleovorans) protein is Imidazoleglycerol-phosphate dehydratase.